The chain runs to 159 residues: Transcription elongation factor GreA (159 aa).

It belongs to the GreA/GreB family.

In terms of biological role, necessary for efficient RNA polymerase transcription elongation past template-encoded arresting sites. The arresting sites in DNA have the property of trapping a certain fraction of elongating RNA polymerases that pass through, resulting in locked ternary complexes. Cleavage of the nascent transcript by cleavage factors such as GreA or GreB allows the resumption of elongation from the new 3'terminus. GreA releases sequences of 2 to 3 nucleotides. This is Transcription elongation factor GreA from Psychromonas ingrahamii (strain DSM 17664 / CCUG 51855 / 37).